A 757-amino-acid chain; its full sequence is Elongation factor G, mitochondrial (757 aa).

Residues 1–41 (MLERAALLHRLRLPAHSLPFIYNGALFGGAKRSFSATSKRC) constitute a mitochondrion transit peptide. A tr-type G domain is found at 66-347 (KLLRNIGVSA…AIVDYLPEPS (282 aa)). Residues 75–82 (AHIDSGKT), 146–150 (DTPGH), and 200–203 (NKMD) contribute to the GTP site.

Belongs to the TRAFAC class translation factor GTPase superfamily. Classic translation factor GTPase family. EF-G/EF-2 subfamily.

The protein localises to the mitochondrion. It functions in the pathway protein biosynthesis; polypeptide chain elongation. Mitochondrial GTPase that catalyzes the GTP-dependent ribosomal translocation step during translation elongation. During this step, the ribosome changes from the pre-translocational (PRE) to the post-translocational (POST) state as the newly formed A-site-bound peptidyl-tRNA and P-site-bound deacylated tRNA move to the P and E sites, respectively. Catalyzes the coordinated movement of the two tRNA molecules, the mRNA and conformational changes in the ribosome. In Eremothecium gossypii (strain ATCC 10895 / CBS 109.51 / FGSC 9923 / NRRL Y-1056) (Yeast), this protein is Elongation factor G, mitochondrial.